The sequence spans 491 residues: Synaptotagmin-9 (491 aa).

The Vesicular portion of the chain corresponds to 1 to 52; it reads MPGARDALCHQALQLLAELCARGALEHDSCQDFIYHLRDRARPRLRDPDISV. The cysteine motif stretch occupies residues 9–31; it reads CHQALQLLAELCARGALEHDSCQ. A helical transmembrane segment spans residues 53–73; the sequence is SLLTLVVTACGLALFGVSLFV. The Cytoplasmic segment spans residues 74-491; that stretch reads SWKLCWVPWR…AHWHSLLEKR (418 aa). A compositionally biased stretch (polar residues) spans 91-104; the sequence is SKDNNQEPLNYTDT. The disordered stretch occupies residues 91–147; the sequence is SKDNNQEPLNYTDTETNEQENSEDFLDPPTPCPDSSMKISHTSPDIPLSTQPGGQDN. Residues 105–116 show a composition bias toward acidic residues; the sequence is ETNEQENSEDFL. Polar residues predominate over residues 127-144; that stretch reads MKISHTSPDIPLSTQPGG. Ser177 carries the phosphoserine modification. 2 C2 domains span residues 220–341 and 352–485; these read ACGK…ILWK and DLGE…AHWH. Asp251, Asp257, Asp309, Phe310, Asp311, Ser314, Asp317, Asp383, Asp389, Asp443, and Asp445 together coordinate Ca(2+).

This sequence belongs to the synaptotagmin family. In terms of assembly, homodimer; disulfide-linked via the cysteine motif. Can also form heterodimers with SYT3, SYT6, SYT7 and SYT10. Requires Ca(2+) as cofactor.

The protein resides in the cytoplasmic vesicle. It is found in the secretory vesicle. It localises to the synaptic vesicle membrane. Its function is as follows. May be involved in Ca(2+)-dependent exocytosis of secretory vesicles through Ca(2+) and phospholipid binding to the C2 domain or may serve as Ca(2+) sensors in the process of vesicular trafficking and exocytosis. This Rattus norvegicus (Rat) protein is Synaptotagmin-9 (Syt9).